The primary structure comprises 132 residues: ATP synthase epsilon chain 1 (132 aa).

The protein belongs to the ATPase epsilon chain family. F-type ATPases have 2 components, CF(1) - the catalytic core - and CF(0) - the membrane proton channel. CF(1) has five subunits: alpha(3), beta(3), gamma(1), delta(1), epsilon(1). CF(0) has three main subunits: a, b and c.

The protein resides in the cell inner membrane. Produces ATP from ADP in the presence of a proton gradient across the membrane. The sequence is that of ATP synthase epsilon chain 1 from Cereibacter sphaeroides (strain ATCC 17023 / DSM 158 / JCM 6121 / CCUG 31486 / LMG 2827 / NBRC 12203 / NCIMB 8253 / ATH 2.4.1.) (Rhodobacter sphaeroides).